The sequence spans 93 residues: YcgL domain-containing protein VSAL_I1068 (93 aa).

Residues 1–84 (MYCSIYKSSK…PPENLLEKYK (84 aa)) form the YcgL domain.

The chain is YcgL domain-containing protein VSAL_I1068 from Aliivibrio salmonicida (strain LFI1238) (Vibrio salmonicida (strain LFI1238)).